The primary structure comprises 131 residues: Large ribosomal subunit protein bL19 (131 aa).

Residues Arg-111–Lys-124 show a composition bias toward basic and acidic residues. Residues Arg-111–Glu-131 form a disordered region.

Belongs to the bacterial ribosomal protein bL19 family.

In terms of biological role, this protein is located at the 30S-50S ribosomal subunit interface and may play a role in the structure and function of the aminoacyl-tRNA binding site. In Methylobacterium nodulans (strain LMG 21967 / CNCM I-2342 / ORS 2060), this protein is Large ribosomal subunit protein bL19.